The sequence spans 497 residues: Bifunctional protein GlmU (497 aa).

The pyrophosphorylase stretch occupies residues 1 to 241 (MSPETIGPAA…RWQVEGANDR (241 aa)). UDP-N-acetyl-alpha-D-glucosamine contacts are provided by residues 14-17 (LAAG), Lys28, Gln81, 86-87 (GT), 112-114 (YGD), Gly151, Glu166, Asn181, and Asn239. Residue Asp114 coordinates Mg(2+). Asn239 lines the Mg(2+) pocket. The linker stretch occupies residues 242 to 262 (IQLSALAAEHNRRIIESWMRA). The tract at residues 263 to 497 (GVTVVDPATT…QATIEEGKQA (235 aa)) is N-acetyltransferase. The UDP-N-acetyl-alpha-D-glucosamine site is built by Arg344 and Lys362. The active-site Proton acceptor is the His374. UDP-N-acetyl-alpha-D-glucosamine is bound by residues Tyr377 and Asn388. Acetyl-CoA is bound by residues 397-398 (NY), Ser416, and Ala434.

It in the N-terminal section; belongs to the N-acetylglucosamine-1-phosphate uridyltransferase family. The protein in the C-terminal section; belongs to the transferase hexapeptide repeat family. As to quaternary structure, homotrimer. Mg(2+) is required as a cofactor.

The protein localises to the cytoplasm. It carries out the reaction alpha-D-glucosamine 1-phosphate + acetyl-CoA = N-acetyl-alpha-D-glucosamine 1-phosphate + CoA + H(+). It catalyses the reaction N-acetyl-alpha-D-glucosamine 1-phosphate + UTP + H(+) = UDP-N-acetyl-alpha-D-glucosamine + diphosphate. Its pathway is nucleotide-sugar biosynthesis; UDP-N-acetyl-alpha-D-glucosamine biosynthesis; N-acetyl-alpha-D-glucosamine 1-phosphate from alpha-D-glucosamine 6-phosphate (route II): step 2/2. It participates in nucleotide-sugar biosynthesis; UDP-N-acetyl-alpha-D-glucosamine biosynthesis; UDP-N-acetyl-alpha-D-glucosamine from N-acetyl-alpha-D-glucosamine 1-phosphate: step 1/1. The protein operates within bacterial outer membrane biogenesis; LPS lipid A biosynthesis. Its function is as follows. Catalyzes the last two sequential reactions in the de novo biosynthetic pathway for UDP-N-acetylglucosamine (UDP-GlcNAc). The C-terminal domain catalyzes the transfer of acetyl group from acetyl coenzyme A to glucosamine-1-phosphate (GlcN-1-P) to produce N-acetylglucosamine-1-phosphate (GlcNAc-1-P), which is converted into UDP-GlcNAc by the transfer of uridine 5-monophosphate (from uridine 5-triphosphate), a reaction catalyzed by the N-terminal domain. In Paenarthrobacter aurescens (strain TC1), this protein is Bifunctional protein GlmU.